A 401-amino-acid polypeptide reads, in one-letter code: Probable sodium/metabolite cotransporter BASS1, chloroplastic (401 aa).

The transit peptide at 1-70 (MASAISLSLL…RRSRFDFVPR (70 aa)) directs the protein to the chloroplast. Transmembrane regions (helical) follow at residues 92–112 (FVGE…CLLG), 122–142 (VTPN…GMTL), 156–176 (ELFA…FFVS), 187–207 (AGLI…VTYI), 212–232 (VALS…MTPL), 247–267 (LGLL…GAFL), 278–298 (VSPV…GYAI), 311–331 (QVVL…YLFS), and 371–391 (VPCA…AGIW).

Belongs to the bile acid:sodium symporter (BASS) (TC 2.A.28) family.

The protein resides in the membrane. It is found in the plastid. The protein localises to the chloroplast envelope. Its function is as follows. May function as sodium-coupled metabolite transporter across the chloroplast envelope. In Arabidopsis thaliana (Mouse-ear cress), this protein is Probable sodium/metabolite cotransporter BASS1, chloroplastic (BASS1).